Here is a 427-residue protein sequence, read N- to C-terminus: Cysteate synthase (427 aa).

Lys104 is modified (N6-(pyridoxal phosphate)lysine). Positions 130 and 382 each coordinate pyridoxal 5'-phosphate.

This sequence belongs to the threonine synthase family. Cysteate synthase subfamily. In terms of assembly, homotrimer. It depends on pyridoxal 5'-phosphate as a cofactor.

It carries out the reaction O-phospho-L-serine + sulfite + H(+) = L-cysteate + phosphate. The protein operates within cofactor biosynthesis; coenzyme M biosynthesis. Functionally, specifically catalyzes the beta-elimination of phosphate from L-phosphoserine and the beta-addition of sulfite to the dehydroalanine intermediate to produce L-cysteate. This is Cysteate synthase from Methanocella paludicola (strain DSM 17711 / JCM 13418 / NBRC 101707 / SANAE).